Consider the following 238-residue polypeptide: MTNLSVNINKVATIRNARGGNMPNVLKVAQDCELFGAQGITVHPRPDERHIRYSDVYGLKPLIRTEFNIEGYPCDKFIDLVLKVKPTQVTLVPDAPDAITSNSGWNVKDNFDYLSELVDTFTSQGIRTSIFVGTDLANIELAAKTGTDRIELYTEPYATYYPEDRDKAIAPFVEAAQLAKNLGLGVNAGHDLNLENLAFFNKNIPWLEEVSIGHALICDALYHGLQETIALYKACLNS.

The 3-amino-2-oxopropyl phosphate site is built by Asn7 and Arg18. The active-site Proton acceptor is the His43. Positions 45 and 50 each coordinate 1-deoxy-D-xylulose 5-phosphate. The Proton acceptor role is filled by Glu70. Thr100 provides a ligand contact to 1-deoxy-D-xylulose 5-phosphate. Catalysis depends on His190, which acts as the Proton donor. Residues Asp191 and 213–214 (GH) contribute to the 3-amino-2-oxopropyl phosphate site.

Belongs to the PNP synthase family. As to quaternary structure, homooctamer; tetramer of dimers.

It localises to the cytoplasm. It carries out the reaction 3-amino-2-oxopropyl phosphate + 1-deoxy-D-xylulose 5-phosphate = pyridoxine 5'-phosphate + phosphate + 2 H2O + H(+). The protein operates within cofactor biosynthesis; pyridoxine 5'-phosphate biosynthesis; pyridoxine 5'-phosphate from D-erythrose 4-phosphate: step 5/5. Catalyzes the complicated ring closure reaction between the two acyclic compounds 1-deoxy-D-xylulose-5-phosphate (DXP) and 3-amino-2-oxopropyl phosphate (1-amino-acetone-3-phosphate or AAP) to form pyridoxine 5'-phosphate (PNP) and inorganic phosphate. The polypeptide is Pyridoxine 5'-phosphate synthase (Parabacteroides distasonis (strain ATCC 8503 / DSM 20701 / CIP 104284 / JCM 5825 / NCTC 11152)).